The sequence spans 155 residues: uncharacterized protein (155 aa).

The signal sequence occupies residues 1–23; it reads MKIRSLSRFVLASTMFASFTASA.

To E.coli YkfB.

This is an uncharacterized protein from Escherichia coli (strain K12).